A 396-amino-acid chain; its full sequence is S-adenosylmethionine synthase (396 aa).

Position 15 (H15) interacts with ATP. Residue D17 coordinates Mg(2+). Residue E43 participates in K(+) binding. Positions 56 and 99 each coordinate L-methionine. Residues 99–109 (QSGDIAQGVDT) form a flexible loop region. ATP is bound by residues 173-175 (DGK), 241-242 (RF), D250, 256-257 (RK), A273, and K277. An L-methionine-binding site is contributed by D250. K281 lines the L-methionine pocket.

It belongs to the AdoMet synthase family. Homotetramer; dimer of dimers. Mg(2+) is required as a cofactor. The cofactor is K(+).

The protein resides in the cytoplasm. The catalysed reaction is L-methionine + ATP + H2O = S-adenosyl-L-methionine + phosphate + diphosphate. It participates in amino-acid biosynthesis; S-adenosyl-L-methionine biosynthesis; S-adenosyl-L-methionine from L-methionine: step 1/1. Functionally, catalyzes the formation of S-adenosylmethionine (AdoMet) from methionine and ATP. The overall synthetic reaction is composed of two sequential steps, AdoMet formation and the subsequent tripolyphosphate hydrolysis which occurs prior to release of AdoMet from the enzyme. The protein is S-adenosylmethionine synthase of Nocardioides sp. (strain ATCC BAA-499 / JS614).